A 506-amino-acid chain; its full sequence is Glutamate--tRNA ligase (506 aa).

The 'HIGH' region motif lies at 23–33 (PSPTGTPHVGL). Positions 267 to 271 (KLSKR) match the 'KMSKS' region motif. Position 270 (lysine 270) interacts with ATP.

This sequence belongs to the class-I aminoacyl-tRNA synthetase family. Glutamate--tRNA ligase type 1 subfamily. In terms of assembly, monomer.

The protein resides in the cytoplasm. The catalysed reaction is tRNA(Glu) + L-glutamate + ATP = L-glutamyl-tRNA(Glu) + AMP + diphosphate. Functionally, catalyzes the attachment of glutamate to tRNA(Glu) in a two-step reaction: glutamate is first activated by ATP to form Glu-AMP and then transferred to the acceptor end of tRNA(Glu). This is Glutamate--tRNA ligase from Clavibacter sepedonicus (Clavibacter michiganensis subsp. sepedonicus).